A 418-amino-acid chain; its full sequence is 3-phosphoshikimate 1-carboxyvinyltransferase (418 aa).

K26, S27, and R31 together coordinate 3-phosphoshikimate. K26 is a binding site for phosphoenolpyruvate. Phosphoenolpyruvate-binding residues include G97 and R125. Residues S170, S171, Q172, D297, N320, and K324 each coordinate 3-phosphoshikimate. Q172 serves as a coordination point for phosphoenolpyruvate. Catalysis depends on D297, which acts as the Proton acceptor. Phosphoenolpyruvate is bound by residues R328, R375, and K400.

Belongs to the EPSP synthase family. In terms of assembly, monomer.

It is found in the cytoplasm. The catalysed reaction is 3-phosphoshikimate + phosphoenolpyruvate = 5-O-(1-carboxyvinyl)-3-phosphoshikimate + phosphate. It participates in metabolic intermediate biosynthesis; chorismate biosynthesis; chorismate from D-erythrose 4-phosphate and phosphoenolpyruvate: step 6/7. In terms of biological role, catalyzes the transfer of the enolpyruvyl moiety of phosphoenolpyruvate (PEP) to the 5-hydroxyl of shikimate-3-phosphate (S3P) to produce enolpyruvyl shikimate-3-phosphate and inorganic phosphate. The protein is 3-phosphoshikimate 1-carboxyvinyltransferase of Pseudomonas syringae pv. tomato (strain ATCC BAA-871 / DC3000).